Here is an 89-residue protein sequence, read N- to C-terminus: Putative RING finger protein 121R (89 aa).

Residues 45-78 (CPICLIAKVNTVLECTHVLCSNCVKKINVCPICR) form an RING-type zinc finger.

The protein is Putative RING finger protein 121R of Invertebrate iridescent virus 6 (IIV-6).